Reading from the N-terminus, the 487-residue chain is N-succinylglutamate 5-semialdehyde dehydrogenase (487 aa).

221–226 (GSSDTG) contributes to the NAD(+) binding site. Catalysis depends on residues E244 and C278.

The protein belongs to the aldehyde dehydrogenase family. AstD subfamily.

The enzyme catalyses N-succinyl-L-glutamate 5-semialdehyde + NAD(+) + H2O = N-succinyl-L-glutamate + NADH + 2 H(+). It functions in the pathway amino-acid degradation; L-arginine degradation via AST pathway; L-glutamate and succinate from L-arginine: step 4/5. Functionally, catalyzes the NAD-dependent reduction of succinylglutamate semialdehyde into succinylglutamate. The polypeptide is N-succinylglutamate 5-semialdehyde dehydrogenase (Paraburkholderia xenovorans (strain LB400)).